A 73-amino-acid chain; its full sequence is UPF0154 protein BCG9842_B1526 (73 aa).

The helical transmembrane segment at 3-23 (IWLGILVGVVALVAGVALGFF) threads the bilayer.

This sequence belongs to the UPF0154 family.

The protein localises to the cell membrane. The sequence is that of UPF0154 protein BCG9842_B1526 from Bacillus cereus (strain G9842).